Consider the following 199-residue polypeptide: Small ribosomal subunit protein mS38 (199 aa).

It belongs to the mitochondrion-specific ribosomal protein mS38 family. Component of the mitochondrial small ribosomal subunit (mt-SSU). Mature mammalian 55S mitochondrial ribosomes consist of a small (28S) and a large (39S) subunit. The 28S small subunit contains a 12S ribosomal RNA (12S mt-rRNA) and 30 different proteins. The 39S large subunit contains a 16S rRNA (16S mt-rRNA), a copy of mitochondrial valine transfer RNA (mt-tRNA(Val)), which plays an integral structural role, and 52 different proteins. Interacts with Aurora-A. In terms of tissue distribution, ubiquitously expressed and especially highly expressed in heart, skeletal muscle and testis.

The protein resides in the mitochondrion matrix. It localises to the nucleus. Functionally, may act as a negative regulator of Aurora-A kinase, by down-regulation through proteasome-dependent degradation. In Homo sapiens (Human), this protein is Small ribosomal subunit protein mS38 (AURKAIP1).